Consider the following 347-residue polypeptide: L-threonine 3-dehydrogenase (347 aa).

C42 lines the Zn(2+) pocket. Catalysis depends on charge relay system residues T44 and H47. 6 residues coordinate Zn(2+): H67, E68, C97, C100, C103, and C111. Residues I180, D200, R205, 267-269, and 292-293 contribute to the NAD(+) site; these read LSL and IT.

This sequence belongs to the zinc-containing alcohol dehydrogenase family. Homotetramer. The cofactor is Zn(2+).

The protein resides in the cytoplasm. It catalyses the reaction L-threonine + NAD(+) = (2S)-2-amino-3-oxobutanoate + NADH + H(+). It functions in the pathway amino-acid degradation; L-threonine degradation via oxydo-reductase pathway; glycine from L-threonine: step 1/2. Catalyzes the NAD(+)-dependent oxidation of L-threonine to 2-amino-3-ketobutyrate. This chain is L-threonine 3-dehydrogenase, found in Bacillus velezensis (strain DSM 23117 / BGSC 10A6 / LMG 26770 / FZB42) (Bacillus amyloliquefaciens subsp. plantarum).